The primary structure comprises 370 residues: Histidinol-phosphate aminotransferase (370 aa).

At Lys223 the chain carries N6-(pyridoxal phosphate)lysine.

This sequence belongs to the class-II pyridoxal-phosphate-dependent aminotransferase family. Histidinol-phosphate aminotransferase subfamily. Homodimer. Pyridoxal 5'-phosphate is required as a cofactor.

The catalysed reaction is L-histidinol phosphate + 2-oxoglutarate = 3-(imidazol-4-yl)-2-oxopropyl phosphate + L-glutamate. The protein operates within amino-acid biosynthesis; L-histidine biosynthesis; L-histidine from 5-phospho-alpha-D-ribose 1-diphosphate: step 7/9. The protein is Histidinol-phosphate aminotransferase of Methylobacterium sp. (strain 4-46).